We begin with the raw amino-acid sequence, 314 residues long: Nodulation protein D 1 (314 aa).

Residues 6-63 form the HTH lysR-type domain; the sequence is LDLNLLVALDALMTERNLTAAARSINLSQPAMSAAVGRLRTYFNDDLFTMVGRELVPT. Residues 23-42 constitute a DNA-binding region (H-T-H motif); the sequence is LTAAARSINLSQPAMSAAVG.

This sequence belongs to the LysR transcriptional regulatory family.

In terms of biological role, nodD regulates the expression of the nodABCFE genes which encode other nodulation proteins. NodD is also a negative regulator of its own expression. Binds flavonoids as inducers. The sequence is that of Nodulation protein D 1 (nodD1) from Rhizobium leguminosarum bv. phaseoli.